The chain runs to 226 residues: Transcription factor bHLH115 (226 aa).

Residues 66-117 (TGSNSKACREKQRRDRLNDKFTELSSVLEPGRTPKTDKVAIINDAIRMVNQA) form the bHLH domain.

In terms of assembly, homodimer. Interacts with BTS and BHLH47/PYE.

The protein resides in the nucleus. The chain is Transcription factor bHLH115 (BHLH115) from Arabidopsis thaliana (Mouse-ear cress).